Here is a 1099-residue protein sequence, read N- to C-terminus: Contactin-5 (1099 aa).

Positions 1 to 18 (MASSWRLILFLSFTSCLS) are cleaved as a signal peptide. Ig-like C2-type domains are found at residues 99–190 (PVFV…ATLQ), 196–282 (NFSG…RVLS), 300–385 (PKIE…GQLQ), 390–474 (PHWV…AELK), 480–569 (PSFE…VSVK), and 571–660 (PTRI…DSVS). A disulfide bridge connects residues Cys123 and Cys173. Asn138 and Asn196 each carry an N-linked (GlcNAc...) asparagine glycan. Intrachain disulfides connect Cys217–Cys269 and Cys322–Cys369. N-linked (GlcNAc...) asparagine glycans are attached at residues Asn397, Asn449, and Asn540. Cystine bridges form between Cys411-Cys458, Cys503-Cys551, and Cys593-Cys650. 4 consecutive Fibronectin type-III domains span residues 673–771 (PPGV…TNEA), 776–873 (APSN…SAEG), 878–972 (APTD…TKRH), and 977–1067 (PPGN…SYAG). Asn779, Asn816, and Asn931 each carry an N-linked (GlcNAc...) asparagine glycan. The interval 958 to 983 (YGPPSREVSATTKRHPPSEPPGNLRW) is disordered. An N-linked (GlcNAc...) asparagine glycan is attached at Asn1002. The GPI-anchor amidated serine moiety is linked to residue Ser1072. Positions 1073 to 1099 (AQSTLHSLSKWSSVTLLLALMLPSSSW) are cleaved as a propeptide — removed in mature form.

This sequence belongs to the immunoglobulin superfamily. Contactin family. In terms of assembly, interacts with PTPRG. In terms of tissue distribution, specifically expressed in the nervous system. Expressed in cerebrum and cerebellum but at low level in spinal cord. In brain, it is expressed in highly restricted regions at postnatal day 7, such as the auditory pathway, including the cochlear nucleus, superior olive, inferior colliculus, medial geniculate nucleus and auditory cortex. Expressed in the accessory olfactory bulb, glomerular and mitral cell layers in the olfactory bulb, anterior thalamic nuclei, layers II-IV of the cerebral cortex, dentate gyrus of the hippocampus and external granule cells and Purkinje cells of the cerebellum. Also expressed in the piriform cortex, inferior olive and facial nucleus. Weakly or not expressed in other parts of the brain.

Its subcellular location is the cell membrane. Its function is as follows. Contactins mediate cell surface interactions during nervous system development. Has some neurite outgrowth-promoting activity in the cerebral cortical neurons but not in hippocampal neurons. Probably involved in neuronal activity in the auditory system. In Rattus norvegicus (Rat), this protein is Contactin-5 (Cntn5).